Here is a 365-residue protein sequence, read N- to C-terminus: Pectate trisaccharide-lyase (365 aa).

A signal peptide spans 1–25 (MRFSRVVSLVLLLVFTAVLTGAVKA). Positions 142, 164, and 168 each coordinate Ca(2+). Residues 149–171 (SHHIWIDHCTFVNGNDGAVDIKK) form a PbH1 1 repeat. R222 is a catalytic residue. A PbH1 2 repeat occupies 261–287 (GAKVHVEGNYFMGYGAVMAEAGIAFLP).

It belongs to the polysaccharide lyase 1 family. As to quaternary structure, homotetramer. Ca(2+) is required as a cofactor.

It is found in the secreted. The catalysed reaction is eliminative cleavage of unsaturated trigalacturonate as the major product from the reducing end of polygalacturonic acid/pectate.. Functionally, cleaves unsaturated trigalacturonate from pectin. Activity is highest towards polygalacturonic acid, activity on methylated pectins decreases with an increasing degree of methylation. The polypeptide is Pectate trisaccharide-lyase (Thermotoga sp. (strain RQ2)).